The chain runs to 541 residues: Man(5)GlcNAc(2)-PP-dolichol translocation protein RFT1 (541 aa).

11 helical membrane passes run Ser16–Leu36, Gly45–Ala62, Leu85–Leu105, Val123–Ala143, Leu154–His176, Leu187–Ser207, Leu335–Leu355, Cys376–Met396, Ser414–Ala434, Val470–Cys490, and Leu499–Thr519.

It belongs to the RFT1 family.

It is found in the endoplasmic reticulum membrane. Its pathway is protein modification; protein glycosylation. Intramembrane glycolipid transporter that operates in the biosynthetic pathway of dolichol-linked oligosaccharides, the glycan precursors employed in protein asparagine (N)-glycosylation. The sequential addition of sugars to dolichol pyrophosphate produces dolichol-linked oligosaccharides containing fourteen sugars, including two GlcNAcs, nine mannoses and three glucoses. Once assembled, the oligosaccharide is transferred from the lipid to nascent proteins by oligosaccharyltransferases. The assembly of dolichol-linked oligosaccharides begins on the cytosolic side of the endoplasmic reticulum membrane and finishes in its lumen. RFT1 could mediate the translocation of the cytosolically oriented intermediate DolPP-GlcNAc2Man5, produced by ALG11, into the ER lumen where dolichol-linked oligosaccharides assembly continues. However, the intramembrane lipid transporter activity could not be confirmed in vitro. The chain is Man(5)GlcNAc(2)-PP-dolichol translocation protein RFT1 from Mus musculus (Mouse).